We begin with the raw amino-acid sequence, 606 residues long: NADH-ubiquinone oxidoreductase chain 5 (606 aa).

16 helical membrane passes run 4–24 (FSSLTLVTLILLTMPIAAINF), 43–63 (AFITSMIPTMMFIHTGQEMII), 84–104 (FFSMMFVPVALFVTWSIMEFS), 114–134 (INQFFKYLLLFLITMLILVTA), 140–160 (LFIGWEGVGIMSFLLIGWWYG), 171–191 (AILYNRIGDIGFILAMAWFLI), 213–233 (LMGLILAATGKSAQFGLHPWL), 241–261 (TPVSALLHSSTMVVAGIFLLI), 272–292 (FGQSIMLCLGAMTTLFTAMCA), 301–320 (IIAFSTSSQLGLMMVTIGIN), 325–347 (AFLHICTHAFFKAMLFMCSGSII), 366–386 (MPFTTTALIIGSLALTGMPFL), 413–433 (LVATSFTAIYSTRIIFFALLG), 457–477 (LLIGSLFAGFIISNNIPPMTI), 485–505 (YLKMTALTVTILGFILALEIS), and 582–602 (GLIKLYFLSFLITILISTTLL).

The protein belongs to the complex I subunit 5 family. As to quaternary structure, core subunit of respiratory chain NADH dehydrogenase (Complex I) which is composed of 45 different subunits.

It is found in the mitochondrion inner membrane. The catalysed reaction is a ubiquinone + NADH + 5 H(+)(in) = a ubiquinol + NAD(+) + 4 H(+)(out). Functionally, core subunit of the mitochondrial membrane respiratory chain NADH dehydrogenase (Complex I) which catalyzes electron transfer from NADH through the respiratory chain, using ubiquinone as an electron acceptor. Essential for the catalytic activity and assembly of complex I. The polypeptide is NADH-ubiquinone oxidoreductase chain 5 (MT-ND5) (Ovis aries (Sheep)).